The sequence spans 841 residues: MAP7 domain-containing protein 1 (841 aa).

Disordered stretches follow at residues 1 to 151 (MESG…ERAK) and 184 to 208 (EQRL…EKNK). Positions 22–52 (PPEPRPSPEGDPSPPPPPMSALVPDTPPDTP) are enriched in pro residues. 2 positions are modified to phosphothreonine: Thr-47 and Thr-51. Phosphoserine occurs at positions 70, 86, and 93. Thr-97 is subject to Phosphothreonine. Phosphoserine occurs at positions 113 and 116. Position 118 is a phosphothreonine (Thr-118). 2 positions are modified to phosphoserine: Ser-123 and Ser-125. Residues 128 to 222 (TKQEVKKAGE…AAIQRSVKKT (95 aa)) adopt a coiled-coil conformation. The segment covering 130–151 (QEVKKAGERHKLAKERREERAK) has biased composition (basic and acidic residues). A phosphoserine mark is found at Ser-254, Ser-273, Ser-313, Ser-366, and Ser-399. Residues 316–813 (TLPRNGRDQG…PSGDKSLSRT (498 aa)) form a disordered region. Positions 365-377 (ASASPLTPCSVTR) are enriched in polar residues. Residues 405-435 (RRPEASPVQKKEKKDKERENEKEKSALARER) are compositionally biased toward basic and acidic residues. A coiled-coil region spans residues 412 to 441 (VQKKEKKDKERENEKEKSALARERSLKKRQ). 5 positions are modified to phosphoserine: Ser-442, Ser-446, Ser-452, Ser-454, and Ser-460. Residues 460–473 (SPKSKARPSSPSTS) are compositionally biased toward low complexity. Lys-462 is covalently cross-linked (Glycyl lysine isopeptide (Lys-Gly) (interchain with G-Cter in SUMO2)). 2 positions are modified to phosphoserine: Ser-479 and Ser-496. A compositionally biased stretch (pro residues) spans 479 to 497 (SPCPSPGPGHTLPPKPPSP). Residues 523–539 (PEDKSQSKRRASNEKES) are compositionally biased toward basic and acidic residues. Phosphoserine is present on residues Ser-544, Ser-548, and Ser-552. Residues 544–561 (SPAPSPAPSPTPAPPQKE) show a composition bias toward pro residues. Thr-554 bears the Phosphothreonine mark. The span at 562-576 (QPPAETPTDAAVLTS) shows a compositional bias: low complexity. Residues 577-586 (PPAPAPPVTP) show a composition bias toward pro residues. Residues 593 to 721 (TTDREEATRL…LEEIMKRTRK (129 aa)) adopt a coiled-coil conformation. A compositionally biased stretch (basic and acidic residues) spans 594-735 (TDREEATRLL…ETKQKQDSKE (142 aa)). 2 positions are modified to phosphoserine: Ser-742 and Ser-753. Thr-813 and Thr-816 each carry phosphothreonine. Ser-834 bears the Phosphoserine mark.

Belongs to the MAP7 family.

Its subcellular location is the cytoplasm. It is found in the cytoskeleton. It localises to the spindle. The protein localises to the microtubule organizing center. The protein resides in the centrosome. Its subcellular location is the midbody. In terms of biological role, microtubule-stabilizing protein involved in the control of cell motility and neurite outgrowth. Facilitate microtubule stabilization through the maintenance of acetylated stable microtubules. The protein is MAP7 domain-containing protein 1 (MAP7D1) of Homo sapiens (Human).